The primary structure comprises 177 residues: Large ribosomal subunit protein uL6 (177 aa).

It belongs to the universal ribosomal protein uL6 family. In terms of assembly, part of the 50S ribosomal subunit.

Functionally, this protein binds to the 23S rRNA, and is important in its secondary structure. It is located near the subunit interface in the base of the L7/L12 stalk, and near the tRNA binding site of the peptidyltransferase center. The sequence is that of Large ribosomal subunit protein uL6 from Pseudomonas entomophila (strain L48).